Consider the following 769-residue polypeptide: Transferrin receptor protein 1 (769 aa).

Over 1-70 the chain is Cytoplasmic; sequence MMDQARSAFS…KPKRFNGFIC (70 aa). The tract at residues 1-70 is mediates interaction with SH3BP4; sequence MMDQARSAFS…KPKRFNGFIC (70 aa). Residues Ser-10 and Ser-19 each carry the phosphoserine modification. Tyr-20 is modified (phosphotyrosine). Positions 20–23 match the Endocytosis signal motif; the sequence is YTRF. Phosphothreonine is present on Thr-21. Ser-24 is subject to Phosphoserine. Positions 61–64 match the Stop-transfer sequence motif; sequence KPKR. Residue Cys-70 is the site of S-palmitoyl cysteine attachment. The chain crosses the membrane as a helical; Signal-anchor for type II membrane protein span at residues 71 to 91; the sequence is YGTIAIILFFLIGFMIGYLGY. The Extracellular portion of the chain corresponds to 92 to 769; the sequence is CKRVEAKSEC…GDIWDIDNEF (678 aa). Thr-107 carries an O-linked (GalNAc...) threonine glycan. Residues 232–322 enclose the PA domain; that stretch reads SKAATVTGRL…GTGDPYTPGF (91 aa). N-linked (GlcNAc...) asparagine glycosylation is found at Asn-260 and Asn-326. The segment at 578–769 is ligand-binding; that stretch reads TMDVYEKLIQ…GDIWDIDNEF (192 aa). Residues 655–657 carry the Cell attachment site motif; sequence RGD. Residues Asn-731 and Asn-736 are each glycosylated (N-linked (GlcNAc...) asparagine).

The protein belongs to the peptidase M28 family. M28B subfamily. Homodimer; disulfide-linked. Binds one transferrin molecule per subunit. Interacts with SH3BP4. Homodimer; disulfide-linked. Binds one transferrin or HFE molecule per subunit. Binds the HLA class II histocompatibility antigen, DR1. Interacts with SH3BP3. Interacts with STEAP3; facilitates TFRC endocytosis in erythroid precursor cells. Post-translationally, stearoylated by ZDHHC6 which inhibits TFRC-mediated activation of the JNK pathway and promotes mitochondrial fragmentation. Stearoylation does not affect iron uptake. In terms of processing, N- and O-glycosylated, phosphorylated and palmitoylated.

It localises to the cell membrane. It is found in the melanosome. Functionally, cellular uptake of iron occurs via receptor-mediated endocytosis of ligand-occupied transferrin receptor into specialized endosomes. Endosomal acidification leads to iron release. The apotransferrin-receptor complex is then recycled to the cell surface with a return to neutral pH and the concomitant loss of affinity of apotransferrin for its receptor. Transferrin receptor is necessary for development of erythrocytes and the nervous system. Positively regulates T and B cell proliferation through iron uptake. Acts as a lipid sensor that regulates mitochondrial fusion by regulating activation of the JNK pathway. When dietary levels of stearate (C18:0) are low, promotes activation of the JNK pathway, resulting in HUWE1-mediated ubiquitination and subsequent degradation of the mitofusin MFN2 and inhibition of mitochondrial fusion. When dietary levels of stearate (C18:0) are high, TFRC stearoylation inhibits activation of the JNK pathway and thus degradation of the mitofusin MFN2. Mediates uptake of NICOL1 into fibroblasts where it may regulate extracellular matrix production. This is Transferrin receptor protein 1 (TFRC) from Felis catus (Cat).